Consider the following 216-residue polypeptide: Histidine biosynthesis bifunctional protein HisIE (216 aa).

The interval 1-127 is phosphoribosyl-AMP cyclohydrolase; the sequence is MSFIDSLSPQ…GKIVAPPGDT (127 aa). A phosphoribosyl-ATP pyrophosphohydrolase region spans residues 128–216; sequence LSQVFQVICD…VYRKLQERRR (89 aa).

It in the N-terminal section; belongs to the PRA-CH family. The protein in the C-terminal section; belongs to the PRA-PH family.

Its subcellular location is the cytoplasm. It catalyses the reaction 1-(5-phospho-beta-D-ribosyl)-ATP + H2O = 1-(5-phospho-beta-D-ribosyl)-5'-AMP + diphosphate + H(+). The catalysed reaction is 1-(5-phospho-beta-D-ribosyl)-5'-AMP + H2O = 1-(5-phospho-beta-D-ribosyl)-5-[(5-phospho-beta-D-ribosylamino)methylideneamino]imidazole-4-carboxamide. Its pathway is amino-acid biosynthesis; L-histidine biosynthesis; L-histidine from 5-phospho-alpha-D-ribose 1-diphosphate: step 2/9. It functions in the pathway amino-acid biosynthesis; L-histidine biosynthesis; L-histidine from 5-phospho-alpha-D-ribose 1-diphosphate: step 3/9. The polypeptide is Histidine biosynthesis bifunctional protein HisIE (hisI) (Nostoc sp. (strain PCC 7120 / SAG 25.82 / UTEX 2576)).